A 423-amino-acid polypeptide reads, in one-letter code: Serine--tRNA ligase (423 aa).

231–233 is an L-serine binding site; that stretch reads TAE. 262–264 is a binding site for ATP; sequence RSE. Glutamate 285 is a binding site for L-serine. 349–352 contacts ATP; that stretch reads EISS. Residue serine 384 coordinates L-serine.

This sequence belongs to the class-II aminoacyl-tRNA synthetase family. Type-1 seryl-tRNA synthetase subfamily. Homodimer. The tRNA molecule binds across the dimer.

Its subcellular location is the cytoplasm. It catalyses the reaction tRNA(Ser) + L-serine + ATP = L-seryl-tRNA(Ser) + AMP + diphosphate + H(+). It carries out the reaction tRNA(Sec) + L-serine + ATP = L-seryl-tRNA(Sec) + AMP + diphosphate + H(+). It participates in aminoacyl-tRNA biosynthesis; selenocysteinyl-tRNA(Sec) biosynthesis; L-seryl-tRNA(Sec) from L-serine and tRNA(Sec): step 1/1. Its function is as follows. Catalyzes the attachment of serine to tRNA(Ser). Is also able to aminoacylate tRNA(Sec) with serine, to form the misacylated tRNA L-seryl-tRNA(Sec), which will be further converted into selenocysteinyl-tRNA(Sec). The chain is Serine--tRNA ligase from Acinetobacter baylyi (strain ATCC 33305 / BD413 / ADP1).